Consider the following 298-residue polypeptide: Lipoyl synthase (298 aa).

The [4Fe-4S] cluster site is built by Cys40, Cys45, Cys51, Cys67, Cys71, Cys74, and Ser280. Residues 53–269 (AVRRTATFMI…KEIAMQKGFS (217 aa)) form the Radical SAM core domain.

Belongs to the radical SAM superfamily. Lipoyl synthase family. Requires [4Fe-4S] cluster as cofactor.

Its subcellular location is the cytoplasm. The enzyme catalyses [[Fe-S] cluster scaffold protein carrying a second [4Fe-4S](2+) cluster] + N(6)-octanoyl-L-lysyl-[protein] + 2 oxidized [2Fe-2S]-[ferredoxin] + 2 S-adenosyl-L-methionine + 4 H(+) = [[Fe-S] cluster scaffold protein] + N(6)-[(R)-dihydrolipoyl]-L-lysyl-[protein] + 4 Fe(3+) + 2 hydrogen sulfide + 2 5'-deoxyadenosine + 2 L-methionine + 2 reduced [2Fe-2S]-[ferredoxin]. It functions in the pathway protein modification; protein lipoylation via endogenous pathway; protein N(6)-(lipoyl)lysine from octanoyl-[acyl-carrier-protein]. Its function is as follows. Catalyzes the radical-mediated insertion of two sulfur atoms into the C-6 and C-8 positions of the octanoyl moiety bound to the lipoyl domains of lipoate-dependent enzymes, thereby converting the octanoylated domains into lipoylated derivatives. In Bacillus velezensis (strain DSM 23117 / BGSC 10A6 / LMG 26770 / FZB42) (Bacillus amyloliquefaciens subsp. plantarum), this protein is Lipoyl synthase.